We begin with the raw amino-acid sequence, 372 residues long: Solute carrier family 35 member F6 (372 aa).

Residues 1–18 (MAWTKYQLFLAGLMLVTG) form the signal peptide. 2 helical membrane passes run 48–68 (FVQA…FYLL) and 89–109 (LLFL…YVAL). Residues 105–160 (MYVALNMTSASSFQMLRGAVIIFTGLFSVAFLDRRLAPSQWLGILITIAGLVVVGL) form the EamA domain. N-linked (GlcNAc...) asparagine glycosylation occurs at N110. The next 7 helical transmembrane spans lie at 116–136 (SFQM…VAFL), 145–165 (WLGI…DLLS), 176–196 (VITG…QMVL), 211–231 (AVGI…VPMF), 261–281 (LIAL…FSGI), 293–312 (MVLD…ALGW), and 320–336 (ILGF…YNGL). T366 is subject to Phosphothreonine.

Belongs to the SLC35F solute transporter family. Interacts with SLC25A5.

The protein localises to the mitochondrion. The protein resides in the lysosome membrane. Functionally, involved in the maintenance of mitochondrial membrane potential in pancreatic ductal adenocarcinoma (PDAC) cells. Promotes pancreatic ductal adenocarcinoma (PDAC) cell growth. May play a role as a nucleotide-sugar transporter. This chain is Solute carrier family 35 member F6 (Slc35f6), found in Mus musculus (Mouse).